The chain runs to 361 residues: D-amino-acid oxidase (361 aa).

The signal sequence occupies residues 1 to 22 (MSNTIVVVGAGVIGLTSALLLS). Residues alanine 10, isoleucine 13, lysine 34, histidine 35, alanine 45, serine 46, glycine 50, and asparagine 52 each coordinate FAD. Asparagine 193 and asparagine 222 each carry an N-linked (GlcNAc...) asparagine glycan. The (R)-lactate site is built by tyrosine 242, tyrosine 258, and arginine 305. Residues tyrosine 242, tyrosine 258, and arginine 305 each coordinate anthranilate. Arginine 305, serine 332, glycine 335, tyrosine 336, and glutamine 337 together coordinate FAD. The Microbody targeting signal signature appears at 359-361 (SKL).

The protein belongs to the DAMOX/DASOX family. The cofactor is FAD. Post-translationally, the N-terminus is blocked.

It is found in the peroxisome matrix. The enzyme catalyses a D-alpha-amino acid + O2 + H2O = a 2-oxocarboxylate + H2O2 + NH4(+). Its function is as follows. Catalyzes the oxidative deamination of D-amino acids with broad substrate specificity. Enables the organism to utilize D-amino acids as a source of nutrients. The sequence is that of D-amino-acid oxidase from Fusarium vanettenii (Neocosmospora pisi).